The primary structure comprises 115 residues: uncharacterized protein (115 aa).

This is an uncharacterized protein from Aquifex aeolicus (strain VF5).